Reading from the N-terminus, the 286-residue chain is GTP-binding protein 8 (286 aa).

An EngB-type G domain is found at 105-278 (KQPEVCFMGR…RCFIAHVTGK (174 aa)). Residues 113 to 120 (GRSNVGKS), 142 to 146 (GHTKK), 160 to 163 (DMPG), 222 to 225 (TKID), and 257 to 259 (VSS) each bind GTP. Positions 120 and 144 each coordinate Mg(2+).

It belongs to the TRAFAC class TrmE-Era-EngA-EngB-Septin-like GTPase superfamily. EngB GTPase family. Mg(2+) is required as a cofactor.

The polypeptide is GTP-binding protein 8 (gtpbp8) (Danio rerio (Zebrafish)).